The sequence spans 197 residues: Phosphoheptose isomerase (197 aa).

The SIS domain maps to 34-196; it reads MVNCLLGGNK…DRTLFPQDEQ (163 aa). 49–51 is a binding site for substrate; that stretch reads NGG. Residues H58 and E62 each contribute to the Zn(2+) site. Residues E62, 91–92, 117–119, S122, and Q172 each bind substrate; these read ND and STS. Positions 172 and 180 each coordinate Zn(2+).

Belongs to the SIS family. GmhA subfamily. Homotetramer. Requires Zn(2+) as cofactor.

The protein resides in the cytoplasm. It carries out the reaction 2 D-sedoheptulose 7-phosphate = D-glycero-alpha-D-manno-heptose 7-phosphate + D-glycero-beta-D-manno-heptose 7-phosphate. The protein operates within carbohydrate biosynthesis; D-glycero-D-manno-heptose 7-phosphate biosynthesis; D-glycero-alpha-D-manno-heptose 7-phosphate and D-glycero-beta-D-manno-heptose 7-phosphate from sedoheptulose 7-phosphate: step 1/1. Catalyzes the isomerization of sedoheptulose 7-phosphate in D-glycero-D-manno-heptose 7-phosphate. The protein is Phosphoheptose isomerase of Shewanella pealeana (strain ATCC 700345 / ANG-SQ1).